A 218-amino-acid polypeptide reads, in one-letter code: Hypoxanthine-guanine phosphoribosyltransferase (218 aa).

Residue K69 participates in GMP binding. K103 carries the post-translational modification N6-acetyllysine. K115 participates in a covalent cross-link: Glycyl lysine isopeptide (Lys-Gly) (interchain with G-Cter in SUMO1); alternate. Residue K115 forms a Glycyl lysine isopeptide (Lys-Gly) (interchain with G-Cter in SUMO2); alternate linkage. GMP-binding positions include 134–142 (EDIIDTGKT), K166, 186–188 (KFV), and D194. D138 functions as the Proton acceptor in the catalytic mechanism. T142 is modified (phosphothreonine). A Mg(2+)-binding site is contributed by D194.

The protein belongs to the purine/pyrimidine phosphoribosyltransferase family. As to quaternary structure, homotetramer. Mg(2+) serves as cofactor.

The protein resides in the cytoplasm. The catalysed reaction is IMP + diphosphate = hypoxanthine + 5-phospho-alpha-D-ribose 1-diphosphate. It catalyses the reaction GMP + diphosphate = guanine + 5-phospho-alpha-D-ribose 1-diphosphate. It functions in the pathway purine metabolism; IMP biosynthesis via salvage pathway; IMP from hypoxanthine: step 1/1. Converts guanine to guanosine monophosphate, and hypoxanthine to inosine monophosphate. Transfers the 5-phosphoribosyl group from 5-phosphoribosylpyrophosphate onto the purine. Plays a central role in the generation of purine nucleotides through the purine salvage pathway. This Mus musculus (Mouse) protein is Hypoxanthine-guanine phosphoribosyltransferase (Hprt1).